Here is an 886-residue protein sequence, read N- to C-terminus: Methanogenesis regulatory histidine kinase FilI (886 aa).

The next 2 helical transmembrane spans lie at 7-27 and 270-290; these read ILAF…TFMC and VVGI…FLEL. An HAMP domain is found at 290–344; that stretch reads LSILMPLATITSSVEAIREQEKGQGSRIPTVGPAELATLAESINEMLDHLESYNQ. Positions 349–419 constitute a PAS domain; sequence SEKRFRTIVD…EKDAGVLSGE (71 aa). Residues 421–473 enclose the PAC domain; the sequence is FVGEVSAHTRAGSSMTFHAVKVPLRDDRGQVTGICGIARDITDIKEAGVELLK. Positions 674 to 886 constitute a Histidine kinase domain; that stretch reads TVSHDLRSPL…TCVLFTLPTP (213 aa). At His-677 the chain carries Phosphohistidine; by autocatalysis.

Post-translationally, autophosphorylated.

The protein resides in the cell membrane. It carries out the reaction ATP + protein L-histidine = ADP + protein N-phospho-L-histidine.. Functionally, member of the two-component regulatory system FilI/FilRs, which is involved in the regulation of methanogenesis. Autophosphorylates and specifically transfers the phosphoryl group to both FilR1 and FilR2. Its function is as follows. Could also catalyze the synthesis of the quorum sensing (QS) signal molecules carboxyl-acyl homoserine lactones (AHLs), which regulate the transition of the cellular morphology from short cells to filaments and of the carbon metabolic flux from biomass formation to methane production. The polypeptide is Methanogenesis regulatory histidine kinase FilI (Methanothrix harundinacea (strain 6Ac) (Methanosaeta harundinacea)).